Here is an 85-residue protein sequence, read N- to C-terminus: Large ribosomal subunit protein bL27 (85 aa).

Belongs to the bacterial ribosomal protein bL27 family.

This is Large ribosomal subunit protein bL27 from Campylobacter fetus subsp. fetus (strain 82-40).